The following is a 150-amino-acid chain: SsrA-binding protein (150 aa).

Belongs to the SmpB family.

The protein localises to the cytoplasm. Its function is as follows. Required for rescue of stalled ribosomes mediated by trans-translation. Binds to transfer-messenger RNA (tmRNA), required for stable association of tmRNA with ribosomes. tmRNA and SmpB together mimic tRNA shape, replacing the anticodon stem-loop with SmpB. tmRNA is encoded by the ssrA gene; the 2 termini fold to resemble tRNA(Ala) and it encodes a 'tag peptide', a short internal open reading frame. During trans-translation Ala-aminoacylated tmRNA acts like a tRNA, entering the A-site of stalled ribosomes, displacing the stalled mRNA. The ribosome then switches to translate the ORF on the tmRNA; the nascent peptide is terminated with the 'tag peptide' encoded by the tmRNA and targeted for degradation. The ribosome is freed to recommence translation, which seems to be the essential function of trans-translation. The chain is SsrA-binding protein from Nitratiruptor sp. (strain SB155-2).